Consider the following 221-residue polypeptide: Sperm acrosome membrane-associated protein 3 (221 aa).

Over 1-69 the chain is Cytoplasmic; the sequence is MGICMSMYTQ…EARSRAPRRQ (69 aa). A helical; Signal-anchor for type II membrane protein membrane pass occupies residues 70 to 90; it reads LCPPGITWLALAYLLSCLLAS. Topologically, residues 91–221 are extracellular; the sequence is SKAKVFSRCE…LSDWVDGCDF (131 aa). In terms of domain architecture, C-type lysozyme spans 94–221; it reads KVFSRCELAK…LSDWVDGCDF (128 aa). Intrachain disulfides connect C99–C219, C123–C207, C157–C172, and C168–C186.

Belongs to the glycosyl hydrolase 22 family. As to quaternary structure, interacts with ASTL. The processed form is expressed in sperm (at protein level). Expressed strongly in testis and epididymis and weakly in pancreas.

It is found in the cytoplasmic vesicle. Its subcellular location is the secretory vesicle. It localises to the acrosome membrane. The protein localises to the secreted. Functionally, sperm surface membrane protein that may be involved in sperm-egg plasma membrane adhesion and fusion during fertilization. It could be a potential receptor for the egg oligosaccharide residue N-acetylglucosamine, which is present in the extracellular matrix over the egg plasma membrane. The processed form has no detectable bacteriolytic activity in vitro. The protein is Sperm acrosome membrane-associated protein 3 (Spaca3) of Mus musculus (Mouse).